Reading from the N-terminus, the 397-residue chain is uncharacterized protein (397 aa).

12 consecutive transmembrane segments (helical) span residues 5 to 25 (LKIL…LWPL), 43 to 63 (LVLM…GFLF), 69 to 89 (FKSI…LVFF), 92 to 112 (WPAY…VFPA), 131 to 151 (AIYV…GVVA), 157 to 177 (YVFL…YFGF), 202 to 222 (FAAL…YSQW), 233 to 253 (IGIS…LIVL), 269 to 289 (LKAQ…MLLT), 293 to 313 (FPMF…VWPA), 333 to 353 (FVNS…GVLV), and 360 to 380 (ALVL…LLYD).

This sequence belongs to the major facilitator superfamily.

The protein resides in the cell membrane. This is an uncharacterized protein from Bacillus subtilis (strain 168).